The sequence spans 266 residues: Phage-like element PBSX protein XkdC (266 aa).

An ATP-binding site is contributed by 124-131; it reads GQPGSGKT.

This sequence to B.subtilis YqaM.

Functionally, may function as a transcriptional antiterminator. This is Phage-like element PBSX protein XkdC (xkdC) from Bacillus subtilis (strain 168).